We begin with the raw amino-acid sequence, 461 residues long: Bifunctional protein GlmU (461 aa).

The segment at 1 to 232 (MNLQIIILAA…SFEVQGINNR (232 aa)) is pyrophosphorylase. UDP-N-acetyl-alpha-D-glucosamine is bound by residues 8-11 (LAAG), Lys22, Gln73, and 78-79 (GT). Asp102 is a binding site for Mg(2+). Residues Gly142, Glu157, and Asn230 each contribute to the UDP-N-acetyl-alpha-D-glucosamine site. Asn230 lines the Mg(2+) pocket. The linker stretch occupies residues 233 to 253 (QQLQQLERTWQQRAANQLMEK). The segment at 254-461 (GATLADANRF…WKRPVKRERD (208 aa)) is N-acetyltransferase. Arg336 and Lys354 together coordinate UDP-N-acetyl-alpha-D-glucosamine. His366 functions as the Proton acceptor in the catalytic mechanism. UDP-N-acetyl-alpha-D-glucosamine contacts are provided by Tyr369 and Asn380. Acetyl-CoA-binding positions include Ala383, 389–390 (NY), Ser408, and Ala426.

It in the N-terminal section; belongs to the N-acetylglucosamine-1-phosphate uridyltransferase family. In the C-terminal section; belongs to the transferase hexapeptide repeat family. In terms of assembly, homotrimer. It depends on Mg(2+) as a cofactor.

It localises to the cytoplasm. The enzyme catalyses alpha-D-glucosamine 1-phosphate + acetyl-CoA = N-acetyl-alpha-D-glucosamine 1-phosphate + CoA + H(+). It catalyses the reaction N-acetyl-alpha-D-glucosamine 1-phosphate + UTP + H(+) = UDP-N-acetyl-alpha-D-glucosamine + diphosphate. The protein operates within nucleotide-sugar biosynthesis; UDP-N-acetyl-alpha-D-glucosamine biosynthesis; N-acetyl-alpha-D-glucosamine 1-phosphate from alpha-D-glucosamine 6-phosphate (route II): step 2/2. It participates in nucleotide-sugar biosynthesis; UDP-N-acetyl-alpha-D-glucosamine biosynthesis; UDP-N-acetyl-alpha-D-glucosamine from N-acetyl-alpha-D-glucosamine 1-phosphate: step 1/1. It functions in the pathway bacterial outer membrane biogenesis; LPS lipid A biosynthesis. In terms of biological role, catalyzes the last two sequential reactions in the de novo biosynthetic pathway for UDP-N-acetylglucosamine (UDP-GlcNAc). The C-terminal domain catalyzes the transfer of acetyl group from acetyl coenzyme A to glucosamine-1-phosphate (GlcN-1-P) to produce N-acetylglucosamine-1-phosphate (GlcNAc-1-P), which is converted into UDP-GlcNAc by the transfer of uridine 5-monophosphate (from uridine 5-triphosphate), a reaction catalyzed by the N-terminal domain. In Legionella pneumophila (strain Paris), this protein is Bifunctional protein GlmU.